Consider the following 133-residue polypeptide: ATP synthase epsilon chain (133 aa).

Belongs to the ATPase epsilon chain family. In terms of assembly, F-type ATPases have 2 components, CF(1) - the catalytic core - and CF(0) - the membrane proton channel. CF(1) has five subunits: alpha(3), beta(3), gamma(1), delta(1), epsilon(1). CF(0) has three main subunits: a, b and c.

The protein localises to the cell inner membrane. Functionally, produces ATP from ADP in the presence of a proton gradient across the membrane. The protein is ATP synthase epsilon chain of Paramagnetospirillum magneticum (strain ATCC 700264 / AMB-1) (Magnetospirillum magneticum).